The chain runs to 131 residues: Small ribosomal subunit protein eS8 (131 aa).

The segment at 1 to 42 is disordered; that stretch reads MKLGAYYKGGDLKKPSGGKKRKVRKTKKKALGGGPPQIPKLG. Over residues 16-30 the composition is skewed to basic residues; the sequence is SGGKKRKVRKTKKKA.

This sequence belongs to the eukaryotic ribosomal protein eS8 family. In terms of assembly, part of the 30S ribosomal subunit.

In Pyrobaculum aerophilum (strain ATCC 51768 / DSM 7523 / JCM 9630 / CIP 104966 / NBRC 100827 / IM2), this protein is Small ribosomal subunit protein eS8.